We begin with the raw amino-acid sequence, 495 residues long: Glucose-6-phosphate 1-dehydrogenase (495 aa).

N-acetylserine is present on S1. NADP(+) is bound by residues 15 to 22 (GASGDLAR), R49, and K149. D-glucose 6-phosphate contacts are provided by residues K149, 179 to 183 (HYLGK), E217, and D236. The Proton acceptor role is filled by H241. R332 provides a ligand contact to NADP(+). A D-glucose 6-phosphate-binding site is contributed by K335. NADP(+) contacts are provided by K341, R345, and R367. Q369 contributes to the D-glucose 6-phosphate binding site. NADP(+) is bound by residues 375 to 377 (YLK), 395 to 397 (DLT), and K463.

The protein belongs to the glucose-6-phosphate dehydrogenase family.

The enzyme catalyses D-glucose 6-phosphate + NADP(+) = 6-phospho-D-glucono-1,5-lactone + NADPH + H(+). It functions in the pathway carbohydrate degradation; pentose phosphate pathway; D-ribulose 5-phosphate from D-glucose 6-phosphate (oxidative stage): step 1/3. Catalyzes the rate-limiting step of the oxidative pentose-phosphate pathway, which represents a route for the dissimilation of carbohydrates besides glycolysis. The main function of this enzyme is to provide reducing power (NADPH) and pentose phosphates for fatty acid and nucleic acid synthesis. The polypeptide is Glucose-6-phosphate 1-dehydrogenase (Cyberlindnera jadinii (Torula yeast)).